Consider the following 624-residue polypeptide: Heat shock factor protein 5 (624 aa).

The DNA-binding element occupies 11–228 (NPNNFPAKLW…FHRSFRRDNL (218 aa)). Disordered regions lie at residues 52–77 (LSPP…SGVG), 112–138 (GAAG…HSPH), 186–214 (SASA…HGPV), 429–461 (CPSS…LEPL), and 572–605 (GPAN…DLHL). 2 stretches are compositionally biased toward gly residues: residues 58 to 77 (GAGG…SGVG) and 112 to 127 (GAAG…GPAG). Composition is skewed to low complexity over residues 186–197 (SASASTSPLQHQ) and 442–457 (PNAN…QASQ). Ser600 is modified (phosphoserine).

This sequence belongs to the HSF family. Homooligomer. In terms of tissue distribution, highly expressed in testis particularly in spermatocytes (at protein level). Not expressed in fetal testis and ovary.

Its subcellular location is the nucleus. It is found in the chromosome. Its function is as follows. DNA-binding transcription factor that is essential for male fertility, spermatogenesis and meiotic prophase progression in spermatocytes under non-stress conditions. Positvely and negatively regulates gene expression to ensure progression of meiotic prophase beyond pachytene stage in spermatocytes. Plays a role in male germline meiotic sex chromosome remodeling and silencing through regulation of SMARCA4. The polypeptide is Heat shock factor protein 5 (Hsf5) (Mus musculus (Mouse)).